The following is a 184-amino-acid chain: Ras protein let-60 (184 aa).

A GTP-binding site is contributed by 10-17 (GDGGVGKS). Positions 32–40 (YDPTIEDSY) match the Effector region motif. Residues 57-61 (DTAGQ) and 116-119 (NKCD) each bind GTP. Cys-181 is subject to Cysteine methyl ester. Cys-181 is lipidated: S-farnesyl cysteine. Positions 182-184 (QIM) are cleaved as a propeptide — removed in mature form.

It belongs to the small GTPase superfamily. Ras family. In terms of assembly, interacts with soc-2. Interacts (in GTP-bound form) with plc-1 (via Ras-associating domain 1). In terms of tissue distribution, expressed in body wall muscles and in the nervous system including ganglion, nerve ring dorsal and ventral nerve cords, motor neurons and sensory tail neurons.

Its subcellular location is the cell membrane. The catalysed reaction is GTP + H2O = GDP + phosphate + H(+). Functionally, GTP-binding protein with GTPase activity. The level of let-60 controls the switch between vulval and hypodermal cell fates during C.elegans vulval induction. May stimulate the guanine nucleotide exchange factor (GEF) activity of rap-1. May induce nuclear condensation. This Caenorhabditis elegans protein is Ras protein let-60.